Reading from the N-terminus, the 446-residue chain is Chromosomal replication initiator protein DnaA (446 aa).

Residues 1 to 81 (MENISDLWNS…AKLAIRFIIP (81 aa)) form a domain I, interacts with DnaA modulators region. The segment at 81-109 (PQSQAEEDIDLPSVKQKHAHDESNHLPQS) is domain II. The interval 110–326 (MLNPKYTFDT…GALIRVVAYS (217 aa)) is domain III, AAA+ region. 4 residues coordinate ATP: G154, G156, K157, and T158. A domain IV, binds dsDNA region spans residues 327–446 (SLINKDMNAD…HVEEVKDILK (120 aa)).

Belongs to the DnaA family. As to quaternary structure, oligomerizes as a right-handed, spiral filament on DNA at oriC.

It is found in the cytoplasm. Plays an essential role in the initiation and regulation of chromosomal replication. ATP-DnaA binds to the origin of replication (oriC) to initiate formation of the DNA replication initiation complex once per cell cycle. Binds the DnaA box (a 9 base pair repeat at the origin) and separates the double-stranded (ds)DNA. Forms a right-handed helical filament on oriC DNA; dsDNA binds to the exterior of the filament while single-stranded (ss)DNA is stabiized in the filament's interior. The ATP-DnaA-oriC complex binds and stabilizes one strand of the AT-rich DNA unwinding element (DUE), permitting loading of DNA polymerase. After initiation quickly degrades to an ADP-DnaA complex that is not apt for DNA replication. Binds acidic phospholipids. The chain is Chromosomal replication initiator protein DnaA from Bacillus mycoides (strain KBAB4) (Bacillus weihenstephanensis).